We begin with the raw amino-acid sequence, 207 residues long: MRTVVIDYGMGNLRSVSKALEAVGFPEVVVSNDYRVASEADVLVLPGVGAFGDAMKNLEELNLVSVIRRHIEKGKPFLGICLGLQLLFEKSYEHGEHRGLGILKGEVILLPLGVKIPHIGWNQLWFKKESEILEGLKEGDFVYFVHSYRVVPEDESVVLTKTDYGEYFVSSIELDNVVAFQFHPEKSQKKGLKLLENFKRKAEKLTT.

A Glutamine amidotransferase type-1 domain is found at 2-207 (RTVVIDYGMG…FKRKAEKLTT (206 aa)). Catalysis depends on cysteine 81, which acts as the Nucleophile. Active-site residues include histidine 183 and glutamate 185.

As to quaternary structure, heterodimer of HisH and HisF.

It is found in the cytoplasm. The catalysed reaction is 5-[(5-phospho-1-deoxy-D-ribulos-1-ylimino)methylamino]-1-(5-phospho-beta-D-ribosyl)imidazole-4-carboxamide + L-glutamine = D-erythro-1-(imidazol-4-yl)glycerol 3-phosphate + 5-amino-1-(5-phospho-beta-D-ribosyl)imidazole-4-carboxamide + L-glutamate + H(+). It catalyses the reaction L-glutamine + H2O = L-glutamate + NH4(+). It participates in amino-acid biosynthesis; L-histidine biosynthesis; L-histidine from 5-phospho-alpha-D-ribose 1-diphosphate: step 5/9. Functionally, IGPS catalyzes the conversion of PRFAR and glutamine to IGP, AICAR and glutamate. The HisH subunit catalyzes the hydrolysis of glutamine to glutamate and ammonia as part of the synthesis of IGP and AICAR. The resulting ammonia molecule is channeled to the active site of HisF. The sequence is that of Imidazole glycerol phosphate synthase subunit HisH (hisH) from Aquifex aeolicus (strain VF5).